Reading from the N-terminus, the 488-residue chain is N-succinylglutamate 5-semialdehyde dehydrogenase (488 aa).

221-226 (GSSRTG) provides a ligand contact to NAD(+). Catalysis depends on residues Glu-244 and Cys-278.

It belongs to the aldehyde dehydrogenase family. AstD subfamily.

It catalyses the reaction N-succinyl-L-glutamate 5-semialdehyde + NAD(+) + H2O = N-succinyl-L-glutamate + NADH + 2 H(+). It participates in amino-acid degradation; L-arginine degradation via AST pathway; L-glutamate and succinate from L-arginine: step 4/5. Its function is as follows. Catalyzes the NAD-dependent reduction of succinylglutamate semialdehyde into succinylglutamate. This is N-succinylglutamate 5-semialdehyde dehydrogenase from Pseudomonas savastanoi pv. phaseolicola (strain 1448A / Race 6) (Pseudomonas syringae pv. phaseolicola (strain 1448A / Race 6)).